The primary structure comprises 140 residues: Lymphocyte antigen 6L (140 aa).

Positions 1–20 are cleaved as a signal peptide; sequence MAPLLLVLWASLVSMELTGG. A UPAR/Ly6 domain is found at 31-124; it reads LSCFECFKVL…GSWEGFWSLP (94 aa). Disulfide bonds link C33-C50 and C105-C110. A lipid anchor (GPI-anchor amidated serine) is attached at S116. The propeptide at 117-140 is removed in mature form; that stretch reads WEGFWSLPGRLLLPMGLGLFCTLL.

The protein localises to the cell membrane. This is Lymphocyte antigen 6L from Mus musculus (Mouse).